The primary structure comprises 100 residues: Urease subunit gamma (100 aa).

The protein belongs to the urease gamma subunit family. Heterotrimer of UreA (gamma), UreB (beta) and UreC (alpha) subunits. Three heterotrimers associate to form the active enzyme.

Its subcellular location is the cytoplasm. The enzyme catalyses urea + 2 H2O + H(+) = hydrogencarbonate + 2 NH4(+). It functions in the pathway nitrogen metabolism; urea degradation; CO(2) and NH(3) from urea (urease route): step 1/1. In terms of biological role, ureolysis may allow urea to be employed as a nitrogen source for growth and produces ammonia which may protect from killing at low pH. The polypeptide is Urease subunit gamma (Streptococcus salivarius (strain 57.I)).